A 315-amino-acid polypeptide reads, in one-letter code: tRNA-dihydrouridine(16) synthase (315 aa).

FMN-binding positions include Pro7–Glu9 and Gln68. Cys98 (proton donor) is an active-site residue. Residues Lys139, Asn199–Glu201, and Gly223–Arg224 each bind FMN.

Belongs to the Dus family. DusC subfamily. FMN is required as a cofactor.

It catalyses the reaction 5,6-dihydrouridine(16) in tRNA + NADP(+) = uridine(16) in tRNA + NADPH + H(+). The enzyme catalyses 5,6-dihydrouridine(16) in tRNA + NAD(+) = uridine(16) in tRNA + NADH + H(+). Its function is as follows. Catalyzes the synthesis of 5,6-dihydrouridine (D), a modified base found in the D-loop of most tRNAs, via the reduction of the C5-C6 double bond in target uridines. Specifically modifies U16 in tRNAs. In Aquipseudomonas alcaligenes (Pseudomonas alcaligenes), this protein is tRNA-dihydrouridine(16) synthase.